The primary structure comprises 307 residues: Methionyl-tRNA formyltransferase (307 aa).

Residue 108–111 coordinates (6S)-5,6,7,8-tetrahydrofolate; the sequence is SLLP.

This sequence belongs to the Fmt family.

The catalysed reaction is L-methionyl-tRNA(fMet) + (6R)-10-formyltetrahydrofolate = N-formyl-L-methionyl-tRNA(fMet) + (6S)-5,6,7,8-tetrahydrofolate + H(+). Functionally, attaches a formyl group to the free amino group of methionyl-tRNA(fMet). The formyl group appears to play a dual role in the initiator identity of N-formylmethionyl-tRNA by promoting its recognition by IF2 and preventing the misappropriation of this tRNA by the elongation apparatus. The sequence is that of Methionyl-tRNA formyltransferase from Stenotrophomonas maltophilia (strain R551-3).